The primary structure comprises 99 residues: Ubiquitin-related modifier 1 homolog 2 (99 aa).

At G99 the chain carries 1-thioglycine. G99 is covalently cross-linked (Glycyl lysine isopeptide (Gly-Lys) (interchain with K-? in acceptor proteins)).

Belongs to the URM1 family. Post-translationally, C-terminal thiocarboxylation occurs in 2 steps, it is first acyl-adenylated (-COAMP) via the hesA/moeB/thiF part of the MOCS3 homolog, then thiocarboxylated (-COSH) via the rhodanese domain of the MOCS3 homolog.

The protein localises to the cytoplasm. The protein operates within tRNA modification; 5-methoxycarbonylmethyl-2-thiouridine-tRNA biosynthesis. Its function is as follows. Acts as a sulfur carrier required for 2-thiolation of mcm(5)S(2)U at tRNA wobble positions of cytosolic tRNA(Lys), tRNA(Glu) and tRNA(Gln). Serves as sulfur donor in tRNA 2-thiolation reaction by being thiocarboxylated (-COSH) at its C-terminus by MOCS3. The sulfur is then transferred to tRNA to form 2-thiolation of mcm(5)S(2)U. Also acts as a ubiquitin-like protein (UBL) that is covalently conjugated via an isopeptide bond to lysine residues of target proteins. The thiocarboxylated form serves as substrate for conjugation and oxidative stress specifically induces the formation of UBL-protein conjugates. The sequence is that of Ubiquitin-related modifier 1 homolog 2 from Arabidopsis thaliana (Mouse-ear cress).